The primary structure comprises 567 residues: Potassium-transporting ATPase potassium-binding subunit (567 aa).

12 helical membrane-spanning segments follow: residues 11–31 (LYLL…AALL), 67–87 (AAAI…LQRW), 136–156 (GLAV…VALV), 179–199 (LWLL…QGVV), 255–275 (FSNW…VVMF), 286–306 (VVLL…VYLA), 333–353 (FGVL…CGAV), 363–383 (LGGG…GGVG), 385–405 (GLYG…LMIG), 422–442 (LVSV…AIAV), 489–509 (LMLA…VLAL), and 532–552 (LFVV…YIPA).

This sequence belongs to the KdpA family. In terms of assembly, the system is composed of three essential subunits: KdpA, KdpB and KdpC.

It localises to the cell inner membrane. Functionally, part of the high-affinity ATP-driven potassium transport (or Kdp) system, which catalyzes the hydrolysis of ATP coupled with the electrogenic transport of potassium into the cytoplasm. This subunit binds the periplasmic potassium ions and delivers the ions to the membrane domain of KdpB through an intramembrane tunnel. The polypeptide is Potassium-transporting ATPase potassium-binding subunit (Laribacter hongkongensis (strain HLHK9)).